Reading from the N-terminus, the 143-residue chain is Large ribosomal subunit protein uL11 (143 aa).

Belongs to the universal ribosomal protein uL11 family. In terms of assembly, part of the ribosomal stalk of the 50S ribosomal subunit. Interacts with L10 and the large rRNA to form the base of the stalk. L10 forms an elongated spine to which L12 dimers bind in a sequential fashion forming a multimeric L10(L12)X complex. In terms of processing, one or more lysine residues are methylated.

Forms part of the ribosomal stalk which helps the ribosome interact with GTP-bound translation factors. The chain is Large ribosomal subunit protein uL11 from Paraburkholderia phytofirmans (strain DSM 17436 / LMG 22146 / PsJN) (Burkholderia phytofirmans).